The primary structure comprises 410 residues: Putative transporter AmpG 1 (410 aa).

The next 12 membrane-spanning stretches (helical) occupy residues 5 to 25 (LSII…TGNT), 40 to 60 (IGLL…APIF), 76 to 96 (LSWI…LSFL), 98 to 118 (PFDN…FSSM), 141 to 161 (GIYI…AIYL), 169 to 189 (EIYK…IVGV), 217 to 237 (ILKP…LILY), 265 to 285 (VGKF…GFIM), 290 to 310 (ILDS…LFII), 320 to 340 (LLFI…TAYI), 356 to 378 (YSFF…GYIV), and 383 to 402 (WQNF…LVLL).

The protein belongs to the major facilitator superfamily.

It localises to the cell inner membrane. This Rickettsia bellii (strain RML369-C) protein is Putative transporter AmpG 1 (ampG1).